A 273-amino-acid polypeptide reads, in one-letter code: 2,3,4,5-tetrahydropyridine-2,6-dicarboxylate N-succinyltransferase (273 aa).

Substrate contacts are provided by Arg104 and Asp141.

This sequence belongs to the transferase hexapeptide repeat family. Homotrimer.

The protein resides in the cytoplasm. It carries out the reaction (S)-2,3,4,5-tetrahydrodipicolinate + succinyl-CoA + H2O = (S)-2-succinylamino-6-oxoheptanedioate + CoA. It functions in the pathway amino-acid biosynthesis; L-lysine biosynthesis via DAP pathway; LL-2,6-diaminopimelate from (S)-tetrahydrodipicolinate (succinylase route): step 1/3. The polypeptide is 2,3,4,5-tetrahydropyridine-2,6-dicarboxylate N-succinyltransferase (Thioalkalivibrio sulfidiphilus (strain HL-EbGR7)).